We begin with the raw amino-acid sequence, 102 residues long: Death-associated protein 1 (102 aa).

The tract at residues Met-1 to Lys-102 is disordered. Position 2 is an N-acetylserine (Ser-2). Ser-3 bears the Phosphoserine; by MTOR mark. Lys-29 carries the N6-acetyllysine modification. A compositionally biased stretch (basic and acidic residues) spans His-32 to Asp-43. Residue Ser-49 is modified to Phosphoserine. At Ser-51 the chain carries Phosphoserine; by MTOR. Ser-91 is subject to Phosphoserine. The span at Pro-92–Lys-102 shows a compositional bias: polar residues.

Belongs to the DAP-DAPL1 family. In terms of assembly, associates with ribosomes; inhibiting translation. Interacts with eiF5a (EIF5A and EIF5A2); inhibiting translation. Phosphorylated. Phosphorylation by MTOR inhibits the suppressive activity of DAP toward autophagy.

Ribosome-binding protein involved in ribosome hibernation, a process during which ribosomes are stabilized in an inactive state and preserved from proteasomal degradation. Acts via its association with eiF5a (EIF5A and EIF5A2) at the polypeptide exit tunnel of the ribosome, preventing mRNA translation. Involved in ribosome hibernation in the mature oocyte by preventing mRNA translation, leading to ribosome inactivation. Ribosomes, which are produced in large quantities during oogenesis, are stored and translationally repressed in the oocyte and early embryo. Also acts as a negative regulator of autophagy. Involved in mediating interferon-gamma-induced cell death. This is Death-associated protein 1 (DAP) from Bos taurus (Bovine).